The primary structure comprises 389 residues: Histidinol-phosphate aminotransferase (389 aa).

Lysine 233 bears the N6-(pyridoxal phosphate)lysine mark.

The protein belongs to the class-II pyridoxal-phosphate-dependent aminotransferase family. It depends on pyridoxal 5'-phosphate as a cofactor.

The catalysed reaction is L-histidinol phosphate + 2-oxoglutarate = 3-(imidazol-4-yl)-2-oxopropyl phosphate + L-glutamate. The protein operates within amino-acid biosynthesis; L-histidine biosynthesis; L-histidine from 5-phospho-alpha-D-ribose 1-diphosphate: step 7/9. The chain is Histidinol-phosphate aminotransferase (HIS5) from Candida maltosa (Yeast).